The chain runs to 271 residues: Short-chain type dehydrogenase/reductase (271 aa).

25–49 (IVTGASRGIGREIALNMAEKGAKVV) lines the NAD(+) pocket. Ser-166 lines the substrate pocket. Tyr-179 (proton acceptor) is an active-site residue.

This sequence belongs to the short-chain dehydrogenases/reductases (SDR) family.

The chain is Short-chain type dehydrogenase/reductase from Picea abies (Norway spruce).